The chain runs to 785 residues: Semaphorin-3F (785 aa).

Positions 1–18 (MLVAGLLLWASLLTGAWP) are cleaved as a signal peptide. A Sema domain is found at 31 to 545 (RVRLSFKELK…SAVGVTHLSL (515 aa)). Asparagine 53 carries an N-linked (GlcNAc...) asparagine glycan. The cysteines at positions 104 and 115 are disulfide-linked. Asparagine 126 carries N-linked (GlcNAc...) asparagine glycosylation. 5 disulfide bridges follow: cysteine 133-cysteine 142, cysteine 300-cysteine 412, cysteine 324-cysteine 372, cysteine 548-cysteine 566, and cysteine 678-cysteine 746. The Ig-like C2-type domain occupies 605–690 (ANKNAVESVQ…TENNFKHVVT (86 aa)). The segment at 752–785 (HVPPSPREAPGAPRSPEPQDQKKPRNRRHHPPDT) is disordered. Residues 775-785 (PRNRRHHPPDT) are compositionally biased toward basic residues.

Belongs to the semaphorin family. As to expression, expressed abundantly but differentially in a variety of neural and nonneural tissues. There is high expression in mammary gland, kidney, fetal brain, and lung and lower expression in heart and liver.

It localises to the secreted. Its function is as follows. May play a role in cell motility and cell adhesion. This chain is Semaphorin-3F (SEMA3F), found in Homo sapiens (Human).